A 442-amino-acid chain; its full sequence is MNLPKRIFIKTFGCQMNEYDSSRMLDMLQAAEGMQTTDNPEEADVILLNTCSVREKAQEKVFSHLGRFAPLKEKNPDLVIGVGGCVASQEGESIVARAPYVDVVFGPQTLHRLPDMIESKRRTGISQVDISFPEVEKFDHLPPPRVEGAAAFLSIMEGCSKYCTFCVVPYTRGDEVSRPFDDILTEAIQLAEQGVKEITLLGQNVNGYRSETADGEMADLALLIEYLAEIPEIERIRYTTSHPNEMTPALIDCYARIPKLVSHLHLPVQAGSDRVLMNMKRNYTVLQYKSIIRKLRAARPDICISSDFIVGFPGETEQDFEATMKLMRDVGFDFSFSFIYSPRPGTPASYLPDDCSPEEKQSRLSRLQALNEAQGKAISASMVGSIQRVLIESVSAKRADELAGRTDNNRIVNFPGDTALINQFVNVRITEALSHTLRGELV.

Residues 5 to 122 enclose the MTTase N-terminal domain; sequence KRIFIKTFGC…LPDMIESKRR (118 aa). Residues cysteine 14, cysteine 51, cysteine 85, cysteine 159, cysteine 163, and cysteine 166 each coordinate [4Fe-4S] cluster. Positions 145–377 constitute a Radical SAM core domain; that stretch reads RVEGAAAFLS…QALNEAQGKA (233 aa). The region spanning 380 to 442 is the TRAM domain; the sequence is ASMVGSIQRV…LSHTLRGELV (63 aa).

The protein belongs to the methylthiotransferase family. MiaB subfamily. In terms of assembly, monomer. [4Fe-4S] cluster is required as a cofactor.

It is found in the cytoplasm. It carries out the reaction N(6)-dimethylallyladenosine(37) in tRNA + (sulfur carrier)-SH + AH2 + 2 S-adenosyl-L-methionine = 2-methylsulfanyl-N(6)-dimethylallyladenosine(37) in tRNA + (sulfur carrier)-H + 5'-deoxyadenosine + L-methionine + A + S-adenosyl-L-homocysteine + 2 H(+). Catalyzes the methylthiolation of N6-(dimethylallyl)adenosine (i(6)A), leading to the formation of 2-methylthio-N6-(dimethylallyl)adenosine (ms(2)i(6)A) at position 37 in tRNAs that read codons beginning with uridine. The sequence is that of tRNA-2-methylthio-N(6)-dimethylallyladenosine synthase from Methylobacillus flagellatus (strain ATCC 51484 / DSM 6875 / VKM B-1610 / KT).